A 274-amino-acid chain; its full sequence is WIMGHMVNGLEQVSEFLNLGANAIEFDIDFDQNGVAKITHHGIPCDCGRLCTKQTVFTEYLDNIRHVTTPGDPKFREQLILLALDLKLQRIPVEKAYAAGVDVATKLLDHYWQRGKSKARAYILLNLPLVQDYEFIRAFKDTLKNEGYEQYNDKVGVNFTGNEDLDEIRKVLKKVGVDKHVWQADGITSCFARGTDRLTEALKRRDTPGYNYAYKVYAWTLVKYSTMRRSLRLGVDGVMSNFPDRVVEVLKEEEFADKFRMATYDDNPWKKFTG.

His5 is an active-site residue. Mg(2+) is bound by residues Glu25 and Asp27. His41 serves as the catalytic Nucleophile. Disulfide bonds link Cys45/Cys51 and Cys47/Cys190. A Mg(2+)-binding site is contributed by Asp85.

The protein belongs to the arthropod phospholipase D family. Class II subfamily. Mg(2+) serves as cofactor. Expressed by the venom gland.

It localises to the secreted. The catalysed reaction is an N-(acyl)-sphingosylphosphocholine = an N-(acyl)-sphingosyl-1,3-cyclic phosphate + choline. The enzyme catalyses an N-(acyl)-sphingosylphosphoethanolamine = an N-(acyl)-sphingosyl-1,3-cyclic phosphate + ethanolamine. It catalyses the reaction a 1-acyl-sn-glycero-3-phosphocholine = a 1-acyl-sn-glycero-2,3-cyclic phosphate + choline. It carries out the reaction a 1-acyl-sn-glycero-3-phosphoethanolamine = a 1-acyl-sn-glycero-2,3-cyclic phosphate + ethanolamine. In terms of biological role, dermonecrotic toxins cleave the phosphodiester linkage between the phosphate and headgroup of certain phospholipids (sphingolipid and lysolipid substrates), forming an alcohol (often choline) and a cyclic phosphate. This toxin acts on sphingomyelin (SM). It may also act on ceramide phosphoethanolamine (CPE), lysophosphatidylcholine (LPC) and lysophosphatidylethanolamine (LPE), but not on lysophosphatidylserine (LPS), and lysophosphatidylglycerol (LPG). It acts by transphosphatidylation, releasing exclusively cyclic phosphate products as second products. Induces dermonecrosis, hemolysis, increased vascular permeability, edema, inflammatory response, and platelet aggregation. This Sicarius cf. damarensis (strain GJB-2008) (Six-eyed sand spider) protein is Dermonecrotic toxin SdSicTox-betaIIB2i.